Reading from the N-terminus, the 205-residue chain is Cyanate hydratase (205 aa).

Residues Arg133, Glu136, and Ser159 contribute to the active site.

The protein belongs to the cyanase family.

The enzyme catalyses cyanate + hydrogencarbonate + 3 H(+) = NH4(+) + 2 CO2. In terms of biological role, catalyzes the reaction of cyanate with bicarbonate to produce ammonia and carbon dioxide. This chain is Cyanate hydratase, found in Thalassiosira pseudonana (Marine diatom).